Consider the following 555-residue polypeptide: Chaperonin GroEL 2 (555 aa).

ATP-binding positions include 29-32, 86-90, G414, 480-482, and D496; these read TLGP, DGTTT, and NAL.

Belongs to the chaperonin (HSP60) family. As to quaternary structure, forms a cylinder of 14 subunits composed of two heptameric rings stacked back-to-back. Interacts with the co-chaperonin GroES.

Its subcellular location is the cytoplasm. The catalysed reaction is ATP + H2O + a folded polypeptide = ADP + phosphate + an unfolded polypeptide.. Functionally, together with its co-chaperonin GroES, plays an essential role in assisting protein folding. The GroEL-GroES system forms a nano-cage that allows encapsulation of the non-native substrate proteins and provides a physical environment optimized to promote and accelerate protein folding. In Synechococcus sp. (strain ATCC 27144 / PCC 6301 / SAUG 1402/1) (Anacystis nidulans), this protein is Chaperonin GroEL 2.